Here is a 355-residue protein sequence, read N- to C-terminus: MTRGEARRPPQEFDRVLSSMCTTPHPAAREAAQAFLATNPGDPETYPAVAERERDAVALLGEIVGLSSPHGYIAAGGTEANLQAVRAARNRADADAVNVVAPASAHFSFQKAADVLGVELRLAPTDGDHRADVAAVADLVDGDTAVVVGVAGTTEYGRVDPIPALADIAAGVDANLHVDAAWGGFVLPFTDHDWSFADAPVNTMAIDPHKMGQAPVPAGGFLARDPETLDALAIETPYLESDTQPTLGGTRSGAGVAGALASLRALWPDGYREQYERTQGNAEYLAAELAARGYDVVDPELPLVAADMPDAEFQALREEGWRISRTASDALRVVCMPHVTREMLAAFLDDVDALA.

K210 is modified (N6-(pyridoxal phosphate)lysine).

Belongs to the group II decarboxylase family. MfnA subfamily. The cofactor is pyridoxal 5'-phosphate.

It carries out the reaction L-aspartate + H(+) = beta-alanine + CO2. It participates in cofactor biosynthesis; coenzyme A biosynthesis. In terms of biological role, catalyzes the decarboxylation of L-aspartate to produce beta-alanine. The polypeptide is Probable L-aspartate decarboxylase (Halobacterium salinarum (strain ATCC 29341 / DSM 671 / R1)).